The following is a 290-amino-acid chain: Shikimate kinase (290 aa).

81-91 (PIASGLKSSSA) is an ATP binding site.

This sequence belongs to the GHMP kinase family. Archaeal shikimate kinase subfamily.

It is found in the cytoplasm. The catalysed reaction is shikimate + ATP = 3-phosphoshikimate + ADP + H(+). It participates in metabolic intermediate biosynthesis; chorismate biosynthesis; chorismate from D-erythrose 4-phosphate and phosphoenolpyruvate: step 5/7. This chain is Shikimate kinase, found in Methanocella arvoryzae (strain DSM 22066 / NBRC 105507 / MRE50).